The primary structure comprises 180 residues: Adenine phosphoribosyltransferase (180 aa).

The protein belongs to the purine/pyrimidine phosphoribosyltransferase family. As to quaternary structure, homodimer.

The protein localises to the cytoplasm. It catalyses the reaction AMP + diphosphate = 5-phospho-alpha-D-ribose 1-diphosphate + adenine. Its pathway is purine metabolism; AMP biosynthesis via salvage pathway; AMP from adenine: step 1/1. In terms of biological role, catalyzes a salvage reaction resulting in the formation of AMP, that is energically less costly than de novo synthesis. This chain is Adenine phosphoribosyltransferase, found in Haemophilus influenzae (strain 86-028NP).